We begin with the raw amino-acid sequence, 1737 residues long: Intraflagellar transport protein osm-1 (1737 aa).

WD repeat units lie at residues 14–53 (DGEA…KDRF), 63–103 (GKKS…NEKK), 110–150 (VQPS…SLYK), 151–189 (TDET…QSKI), 191–229 (TLQV…QQFD), 233–273 (QSEK…WDEG), and 511–553 (DQRS…EQVT). TPR repeat units follow at residues 700 to 737 (NDTE…KTSY), 803 to 836 (SQLY…GKAI), 848 to 881 (VTLE…KKAV), 907 to 940 (TGYY…NDAI), 979 to 1012 (HGRF…DDVL), 1037 to 1070 (RGDL…SDAY), and 1137 to 1170 (GTVH…ELAV).

It belongs to the IFT172 family. As to quaternary structure, component of the IFT complex B composed of at least che-2, che-13, dyf-1, dyf-3, dyf-6, dyf-11, dyf-13, ift-20, ift-74, ift-81, ifta-2, osm-1, osm-5 and osm-6. As to expression, expressed in amphid and phasmid chemosensory neurons, where it appears to concentrate at the base of the transition zones, which correspond to the basal bodies of motile and sensory cilia. Moves in the retrograde direction along cilia and dendrites, suggesting that it is retrieved from the distal endings of the cilia by a retrograde transport pathway that moves it along cilia and then dendrites, back to the neuronal cell body.

Its subcellular location is the cell projection. It is found in the cilium. Its function is as follows. Component of the intraflagellar transport (IFT) complex B required for transport of proteins in the motile cilium. May be required for ciliary entrance and transport of specific ciliary cargo proteins such as che-3 which are related to motility. Required for the maintenance and formation of chemosensory cilia that detect chemosensory cues. The chain is Intraflagellar transport protein osm-1 from Caenorhabditis elegans.